Consider the following 375-residue polypeptide: Growth/differentiation factor 8 (375 aa).

Residues 1–18 form the signal peptide; the sequence is MQRLQICVYIYLFVLIVA. Positions 19–266 are excised as a propeptide; that stretch reads GPVDLSENSE…VTDTPKRSRR (248 aa). N-linked (GlcNAc...) asparagine glycosylation occurs at N71. 4 cysteine pairs are disulfide-bonded: C272–C282, C281–C340, C309–C372, and C313–C374.

Belongs to the TGF-beta family. In terms of assembly, homodimer; disulfide-linked. Interacts with WFIKKN2, leading to inhibit its activity. Interacts with FSTL3. Synthesized as large precursor molecule that undergoes proteolytic cleavage to generate an N-terminal propeptide and a disulfide linked C-terminal dimer, which is the biologically active molecule. The circulating form consists of a latent complex of the C-terminal dimer and other proteins, including its propeptide, which maintain the C-terminal dimer in a latent, inactive state. Ligand activation requires additional cleavage of the prodomain by a tolloid-like metalloproteinase.

It is found in the secreted. Functionally, acts specifically as a negative regulator of skeletal muscle growth. In Canis lupus familiaris (Dog), this protein is Growth/differentiation factor 8 (MSTN).